A 379-amino-acid polypeptide reads, in one-letter code: Fimbrium subunit Fim1C (379 aa).

Residues 1 to 17 (MEVKSLLMVMATLTIAG) form the signal peptide. Cys-18 carries the N-palmitoyl cysteine lipid modification. Residue Cys-18 is the site of S-diacylglycerol cysteine attachment. The propeptide occupies 18–45 (CSQNEMTEMNPDTNRTIGLDVYTEVQTR).

The protein belongs to the bacteroidetes fimbrillin superfamily. Mfa-like family. As to quaternary structure, may be part of the fimbrial tip.

The protein resides in the fimbrium. The protein localises to the cell outer membrane. Its function is as follows. Probably a component of the fimbrium tip. Fimbriae are filamentous appendages on the cell surface that mediate cell adhesion and biofilm formation. This chain is Fimbrium subunit Fim1C (fim1C), found in Phocaeicola vulgatus (strain ATCC 8482 / DSM 1447 / JCM 5826 / CCUG 4940 / NBRC 14291 / NCTC 11154) (Bacteroides vulgatus).